A 314-amino-acid chain; its full sequence is tRNA dimethylallyltransferase (314 aa).

Residue Gly-6–Thr-13 coordinates ATP. Thr-8–Thr-13 contacts substrate. The interval Asp-31–Gln-34 is interaction with substrate tRNA.

Belongs to the IPP transferase family. As to quaternary structure, monomer. Mg(2+) serves as cofactor.

It carries out the reaction adenosine(37) in tRNA + dimethylallyl diphosphate = N(6)-dimethylallyladenosine(37) in tRNA + diphosphate. In terms of biological role, catalyzes the transfer of a dimethylallyl group onto the adenine at position 37 in tRNAs that read codons beginning with uridine, leading to the formation of N6-(dimethylallyl)adenosine (i(6)A). This is tRNA dimethylallyltransferase from Pseudothermotoga lettingae (strain ATCC BAA-301 / DSM 14385 / NBRC 107922 / TMO) (Thermotoga lettingae).